We begin with the raw amino-acid sequence, 896 residues long: Isoleucine--tRNA ligase (896 aa).

The 'HIGH' region motif lies at 57–67 (PYANNNIHIGH). Glu-543 provides a ligand contact to L-isoleucyl-5'-AMP. A 'KMSKS' region motif is present at residues 584-588 (KMSKS). Residue Lys-587 coordinates ATP. Residues Cys-869, Cys-872, Cys-885, and Cys-888 each contribute to the Zn(2+) site.

It belongs to the class-I aminoacyl-tRNA synthetase family. IleS type 1 subfamily. Monomer. The cofactor is Zn(2+).

The protein resides in the cytoplasm. It catalyses the reaction tRNA(Ile) + L-isoleucine + ATP = L-isoleucyl-tRNA(Ile) + AMP + diphosphate. Functionally, catalyzes the attachment of isoleucine to tRNA(Ile). As IleRS can inadvertently accommodate and process structurally similar amino acids such as valine, to avoid such errors it has two additional distinct tRNA(Ile)-dependent editing activities. One activity is designated as 'pretransfer' editing and involves the hydrolysis of activated Val-AMP. The other activity is designated 'posttransfer' editing and involves deacylation of mischarged Val-tRNA(Ile). The sequence is that of Isoleucine--tRNA ligase from Acholeplasma laidlawii (strain PG-8A).